A 1107-amino-acid polypeptide reads, in one-letter code: Unconventional myosin-Ie (1107 aa).

Residues 19–692 (SGVDDMVLLS…SLFLLEEMRE (674 aa)) form the Myosin motor domain. 112-119 (GESGAGKT) is an ATP binding site. Residues 581–591 (PHYIRCIKPNE) form an actin-binding region. Residues 695-724 (YDGYARVIQKTWRKFVARKKYVQMREEASD) enclose the IQ domain. The TH1 domain maps to 730-922 (KERRRNSINR…NKVLQVSIGP (193 aa)). Positions 919–1052 (SIGPGLPKNS…KPQPKPKPQV (134 aa)) are disordered. Polar residues-rich tracts occupy residues 979–989 (NQRSNQKSLYT) and 998–1012 (RQQSTGSDRLSQTPE). Residue S1001 is modified to Phosphoserine. Pro residues predominate over residues 1034 to 1051 (RPPPAGGRPKPQPKPKPQ). One can recognise an SH3 domain in the interval 1050–1107 (PQVPQCKALYAYDAQDTDELSFNANDIIDIIKEDPSGWWTGRLRGKQGLFPNNYVTKI).

It belongs to the TRAFAC class myosin-kinesin ATPase superfamily. Myosin family. In terms of assembly, interacts with CALM and F-actin. Interacts (via SH3 domain) with SYNJ1, DNM1 and DNM2. Interacts with ARL14EP. Interacts with CARMIL1. Detected in kidney glomeruli (at protein level). Detected in utricle.

It localises to the cytoplasm. The protein localises to the cell junction. Its subcellular location is the cytoplasmic vesicle. The protein resides in the clathrin-coated vesicle. It is found in the cytoskeleton. Functionally, myosins are actin-based motor molecules with ATPase activity. Unconventional myosins serve in intracellular movements. Their highly divergent tails bind to membranous compartments, which are then moved relative to actin filaments. Binds to membranes containing anionic phospholipids via its tail domain. Involved in clathrin-mediated endocytosis and intracellular movement of clathrin-coated vesicles. Required for normal morphology of the glomerular basement membrane, normal development of foot processes by kidney podocytes and normal kidney function. In dendritic cells, may control the movement of class II-containing cytoplasmic vesicles along the actin cytoskeleton by connecting them with the actin network via ARL14EP and ARL14. This chain is Unconventional myosin-Ie (Myo1e), found in Mus musculus (Mouse).